A 381-amino-acid chain; its full sequence is Cytochrome b (381 aa).

The next 4 membrane-spanning stretches (helical) occupy residues 34-54, 78-99, 114-134, and 179-199; these read FGSLLGLCLIIQILTGLFLAM, WLIRNIHANGASLFFICVYLHI, WNIGVILLFLLMATAFVGYVL, and FFAFHFLLPFLILALTIIHLL. Heme b-binding residues include His-84 and His-98. Positions 183 and 197 each coordinate heme b. His-202 provides a ligand contact to a ubiquinone. The next 4 helical transmembrane spans lie at 227-247, 289-309, 321-341, and 348-368; these read YKDLLGFFVMIFFLTTLALFM, LGGVLALLFSIFILMLVPLLH, LTQIFFWLLVANSIILTWIGG, and FITVGQVASISYFSLFLIIMP.

Belongs to the cytochrome b family. The cytochrome bc1 complex contains 3 respiratory subunits (MT-CYB, CYC1 and UQCRFS1), 2 core proteins (UQCRC1 and UQCRC2) and probably 6 low-molecular weight proteins. Heme b is required as a cofactor.

It localises to the mitochondrion inner membrane. Component of the ubiquinol-cytochrome c reductase complex (complex III or cytochrome b-c1 complex) that is part of the mitochondrial respiratory chain. The b-c1 complex mediates electron transfer from ubiquinol to cytochrome c. Contributes to the generation of a proton gradient across the mitochondrial membrane that is then used for ATP synthesis. In Sphyrna tiburo vespertina (Pacific bonnethead shark), this protein is Cytochrome b (mt-cyb).